The primary structure comprises 585 residues: Cytidine monophosphate-N-acetylneuraminic acid hydroxylase (585 aa).

The Rieske domain occupies 9 to 107; it reads LSPVEVANLK…VEMDENNRLL (99 aa). Cys49, His51, Cys70, and His73 together coordinate [2Fe-2S] cluster.

It belongs to the CMP-Neu5Ac hydroxylase family. It depends on [2Fe-2S] cluster as a cofactor.

Its subcellular location is the cytoplasm. It carries out the reaction CMP-N-acetyl-beta-neuraminate + 2 Fe(II)-[cytochrome b5] + O2 + 2 H(+) = CMP-N-glycoloyl-beta-neuraminate + 2 Fe(III)-[cytochrome b5] + H2O. It functions in the pathway amino-sugar metabolism; N-acetylneuraminate metabolism. Its function is as follows. Sialic acids are components of carbohydrate chains of glycoconjugates and are involved in cell-cell recognition and cell-pathogen interactions. Catalyzes the conversion of CMP-N-acetylneuraminic acid (CMP-Neu5Ac) into its hydroxylated derivative CMP-N-glycolylneuraminic acid (CMP-Neu5Gc), a sialic acid abundantly expressed at the surface of many cells. This is Cytidine monophosphate-N-acetylneuraminic acid hydroxylase (CMAH) from Pongo pygmaeus (Bornean orangutan).